The primary structure comprises 86 residues: MNIFRLFNKQRTAPAARERLQVLLAHERSSAGSDLVSLLREEILAVIAKHVELDHDKVQVTIDRNEFVSTLEIDVEIPLNAAVQAA.

Belongs to the MinE family.

In terms of biological role, prevents the cell division inhibition by proteins MinC and MinD at internal division sites while permitting inhibition at polar sites. This ensures cell division at the proper site by restricting the formation of a division septum at the midpoint of the long axis of the cell. This is Cell division topological specificity factor from Rhizobium etli (strain ATCC 51251 / DSM 11541 / JCM 21823 / NBRC 15573 / CFN 42).